Here is a 94-residue protein sequence, read N- to C-terminus: Small ribosomal subunit protein uS19 (94 aa).

The protein belongs to the universal ribosomal protein uS19 family.

Functionally, protein S19 forms a complex with S13 that binds strongly to the 16S ribosomal RNA. This chain is Small ribosomal subunit protein uS19, found in Desulforamulus reducens (strain ATCC BAA-1160 / DSM 100696 / MI-1) (Desulfotomaculum reducens).